The following is a 188-amino-acid chain: EP300-interacting inhibitor of differentiation 1 (188 aa).

The disordered stretch occupies residues 1-122 (MSEMAELSEL…PEEEQLSGAG (122 aa)). Composition is skewed to acidic residues over residues 53–64 (LEEEGPMEEEEA) and 94–117 (FESEDEGEEFDDWEDDYDYPEEEQ). The interval 55–121 (EEGPMEEEEA…YPEEEQLSGA (67 aa)) is interaction with NR0B2. Residues 179 to 183 (LGCDE) carry the LXCXE motif motif.

As to quaternary structure, interacts via its LXCXE motif with the entire pocket region of RB1. Interacts with EP300, NR0B2 and TRIM27.

Its subcellular location is the nucleus. It is found in the cytoplasm. In terms of biological role, interacts with RB1 and EP300 and acts as a repressor of MYOD1 transactivation. Inhibits EP300 and CBP histone acetyltransferase activity. May be involved in coupling cell cycle exit to the transcriptional activation of genes required for cellular differentiation. May act as a candidate coinhibitory factor for NR0B2 that can be directly linked to transcription inhibitory mechanisms. The protein is EP300-interacting inhibitor of differentiation 1 of Pongo abelii (Sumatran orangutan).